The sequence spans 316 residues: tRNA dimethylallyltransferase (316 aa).

15–22 (GPTASGKS) serves as a coordination point for ATP. 17–22 (TASGKS) serves as a coordination point for substrate. The interaction with substrate tRNA stretch occupies residues 40 to 43 (DSRQ).

This sequence belongs to the IPP transferase family. Monomer. Mg(2+) serves as cofactor.

The catalysed reaction is adenosine(37) in tRNA + dimethylallyl diphosphate = N(6)-dimethylallyladenosine(37) in tRNA + diphosphate. In terms of biological role, catalyzes the transfer of a dimethylallyl group onto the adenine at position 37 in tRNAs that read codons beginning with uridine, leading to the formation of N6-(dimethylallyl)adenosine (i(6)A). The sequence is that of tRNA dimethylallyltransferase from Chlorobium limicola (strain DSM 245 / NBRC 103803 / 6330).